We begin with the raw amino-acid sequence, 218 residues long: Thiopurine S-methyltransferase (218 aa).

Tryptophan 10, leucine 45, glutamate 66, and arginine 123 together coordinate S-adenosyl-L-methionine.

Belongs to the class I-like SAM-binding methyltransferase superfamily. TPMT family.

It is found in the cytoplasm. The enzyme catalyses S-adenosyl-L-methionine + a thiopurine = S-adenosyl-L-homocysteine + a thiopurine S-methylether.. This Shewanella sp. (strain MR-7) protein is Thiopurine S-methyltransferase.